The chain runs to 95 residues: UPF0213 protein YPA_2977 (95 aa).

The region spanning 4–79 (SLWHLYLLRT…KQLSKQQKEK (76 aa)) is the GIY-YIG domain.

The protein belongs to the UPF0213 family.

The protein is UPF0213 protein YPA_2977 of Yersinia pestis bv. Antiqua (strain Antiqua).